Reading from the N-terminus, the 327-residue chain is Ribosomal RNA small subunit methyltransferase H (327 aa).

Residues 41–43 (GGH), D60, Y87, D108, and Q115 contribute to the S-adenosyl-L-methionine site. A disordered region spans residues 292 to 327 (AERADEQETLENPRAASARLRAVERLRETTTPGSAR).

The protein belongs to the methyltransferase superfamily. RsmH family.

It localises to the cytoplasm. It catalyses the reaction cytidine(1402) in 16S rRNA + S-adenosyl-L-methionine = N(4)-methylcytidine(1402) in 16S rRNA + S-adenosyl-L-homocysteine + H(+). Its function is as follows. Specifically methylates the N4 position of cytidine in position 1402 (C1402) of 16S rRNA. In Kocuria rhizophila (strain ATCC 9341 / DSM 348 / NBRC 103217 / DC2201), this protein is Ribosomal RNA small subunit methyltransferase H.